Reading from the N-terminus, the 232-residue chain is 2,3,4,5-tetrahydropyridine-2,6-dicarboxylate N-acetyltransferase (232 aa).

Belongs to the transferase hexapeptide repeat family. DapH subfamily.

It carries out the reaction (S)-2,3,4,5-tetrahydrodipicolinate + acetyl-CoA + H2O = L-2-acetamido-6-oxoheptanedioate + CoA. It participates in amino-acid biosynthesis; L-lysine biosynthesis via DAP pathway; LL-2,6-diaminopimelate from (S)-tetrahydrodipicolinate (acetylase route): step 1/3. In terms of biological role, catalyzes the transfer of an acetyl group from acetyl-CoA to tetrahydrodipicolinate. This Kosmotoga olearia (strain ATCC BAA-1733 / DSM 21960 / TBF 19.5.1) protein is 2,3,4,5-tetrahydropyridine-2,6-dicarboxylate N-acetyltransferase.